Consider the following 228-residue polypeptide: Octanoyltransferase (228 aa).

Positions 31 to 212 constitute a BPL/LPL catalytic domain; the sequence is GETDGILILL…KFSEVFGIHF (182 aa). Substrate contacts are provided by residues 76–83, 143–145, and 156–158; these read RGGKITFH, AIG, and GIA. The Acyl-thioester intermediate role is filled by C174.

It belongs to the LipB family.

It localises to the cytoplasm. It carries out the reaction octanoyl-[ACP] + L-lysyl-[protein] = N(6)-octanoyl-L-lysyl-[protein] + holo-[ACP] + H(+). It functions in the pathway protein modification; protein lipoylation via endogenous pathway; protein N(6)-(lipoyl)lysine from octanoyl-[acyl-carrier-protein]: step 1/2. Its function is as follows. Catalyzes the transfer of endogenously produced octanoic acid from octanoyl-acyl-carrier-protein onto the lipoyl domains of lipoate-dependent enzymes. Lipoyl-ACP can also act as a substrate although octanoyl-ACP is likely to be the physiological substrate. This Thermoanaerobacter sp. (strain X514) protein is Octanoyltransferase.